A 690-amino-acid polypeptide reads, in one-letter code: MSSEGRYMTWKDMSHNKFMTDRWARVSDVVSVIKQSHAMDLSKAANLSIIKTALAGLGSGWTDNNPFVSPMTRFPQTLTMYGALVLYVNLSDPEFALIMTKVSTLTDSGLADNASANVRRDVVSGNKAESSGKTAGTNENSAYTLTVSLAGLAQALRLEELMWTRDKFEDRLKLPWTPVQGRTSPPGQXQLAAARVTAHIRAAKRALLYPGDSPEWVGWKHFYPPPPYDVYDVPPLDIINAKLAADDIGGLVTPTPASSHGLPFEVSEEVEQANRNSLWLTVGLLLAALAVGIGVAAYHRKKLQSRLRELKLLWGSTGGSGGGGGFDTELYMRATDTVSLGTTLSEHAASAPSGLRHRPAATDSGPHEALPFEVWVFDNLAVVYDSIGMSDLFYTVREFVGVFNGEFEGLIELLESPDDDDGVYTNAPRDTAIDAYESQENYDRIDIETVLIERRINLKKLLLEEAELERRERDMTMIADEEQRTLLHRLESSRVEATHAVAKAEADARAAVAMAALASKEANDYDSKMAFDRSCKEQELRLRELEVNSMPSKTERYVHTGIQGGAQLAGAMAVGAMLRRGAGSSSQTVSSGANIGSRSQSLTRGRSASQPLSSVGGSTRGVNNNISNTNLVRAGNSAEVSAGRSTNSGNSNFWSKLRVGEGWSKYSVERAATRAQRAIVLPAPPSAPAG.

The stretch at Leu-451 to Arg-509 forms a coiled coil. An Involved in virus transmission by the vector motif is present at residues Lys-553–Arg-556. A disordered region spans residues Gly-583–Asn-628.

Belongs to the virgaviridae capsid protein family.

The protein localises to the virion. Functionally, self-assembles to form a helical capsid wrapping up the viral genomic DNA. In terms of biological role, minor capsid protein involved in virus transmission by the vector S.subterranea. The polypeptide is Capsid readthrough protein (Beta macrocarpa (Beet)).